Consider the following 234-residue polypeptide: ATP-dependent dethiobiotin synthetase BioD (234 aa).

ATP is bound at residue 12–17 (DVGKTI). Residue Thr-16 coordinates Mg(2+). Lys-37 is an active-site residue. Thr-41 provides a ligand contact to substrate. ATP is bound by residues Asp-54 and 115–118 (EGAG). Residues Asp-54 and Glu-115 each coordinate Mg(2+).

It belongs to the dethiobiotin synthetase family. Homodimer. Requires Mg(2+) as cofactor.

The protein localises to the cytoplasm. It catalyses the reaction (7R,8S)-7,8-diammoniononanoate + CO2 + ATP = (4R,5S)-dethiobiotin + ADP + phosphate + 3 H(+). Its pathway is cofactor biosynthesis; biotin biosynthesis; biotin from 7,8-diaminononanoate: step 1/2. Its function is as follows. Catalyzes a mechanistically unusual reaction, the ATP-dependent insertion of CO2 between the N7 and N8 nitrogen atoms of 7,8-diaminopelargonic acid (DAPA, also called 7,8-diammoniononanoate) to form a ureido ring. In Lysinibacillus sphaericus (strain C3-41), this protein is ATP-dependent dethiobiotin synthetase BioD.